A 307-amino-acid polypeptide reads, in one-letter code: Small ribosomal subunit biogenesis GTPase RsgA (307 aa).

Residues 1 to 20 (MPSEHPFSDGISTPNPKETM) are disordered. Residues 10–20 (GISTPNPKETM) show a composition bias toward polar residues. A CP-type G domain is found at 85 to 242 (RQDAWKTKLI…LIDSPGLQEF (158 aa)). GTP-binding positions include 135-138 (NKAD) and 184-192 (GQSGMGKST). Residues Cys266, Cys271, His273, and Cys279 each contribute to the Zn(2+) site.

The protein belongs to the TRAFAC class YlqF/YawG GTPase family. RsgA subfamily. In terms of assembly, monomer. Associates with 30S ribosomal subunit, binds 16S rRNA. Zn(2+) serves as cofactor.

Its subcellular location is the cytoplasm. In terms of biological role, one of several proteins that assist in the late maturation steps of the functional core of the 30S ribosomal subunit. Helps release RbfA from mature subunits. May play a role in the assembly of ribosomal proteins into the subunit. Circularly permuted GTPase that catalyzes slow GTP hydrolysis, GTPase activity is stimulated by the 30S ribosomal subunit. The chain is Small ribosomal subunit biogenesis GTPase RsgA from Neisseria meningitidis serogroup A / serotype 4A (strain DSM 15465 / Z2491).